Reading from the N-terminus, the 456-residue chain is Bifunctional protein GlmU (456 aa).

Positions 1–229 (MLNSAMSVVI…LSEVEGVNNR (229 aa)) are pyrophosphorylase. UDP-N-acetyl-alpha-D-glucosamine is bound by residues 11 to 14 (LAAG), Lys-25, Gln-76, 81 to 82 (GT), 103 to 105 (YGD), Gly-140, Glu-154, Asn-169, and Asn-227. Asp-105 is a binding site for Mg(2+). Asn-227 contacts Mg(2+). The tract at residues 230–250 (LQLSRLERVYQSEQAEKLLLA) is linker. The interval 251–456 (GVMLRDPARF…QGWQRPAKKK (206 aa)) is N-acetyltransferase. Positions 333 and 351 each coordinate UDP-N-acetyl-alpha-D-glucosamine. The Proton acceptor role is filled by His-363. The UDP-N-acetyl-alpha-D-glucosamine site is built by Tyr-366 and Asn-377. Acetyl-CoA-binding positions include Ala-380, 386–387 (NY), Ser-405, Ala-423, and Arg-440.

In the N-terminal section; belongs to the N-acetylglucosamine-1-phosphate uridyltransferase family. This sequence in the C-terminal section; belongs to the transferase hexapeptide repeat family. In terms of assembly, homotrimer. Requires Mg(2+) as cofactor.

It localises to the cytoplasm. It carries out the reaction alpha-D-glucosamine 1-phosphate + acetyl-CoA = N-acetyl-alpha-D-glucosamine 1-phosphate + CoA + H(+). It catalyses the reaction N-acetyl-alpha-D-glucosamine 1-phosphate + UTP + H(+) = UDP-N-acetyl-alpha-D-glucosamine + diphosphate. It participates in nucleotide-sugar biosynthesis; UDP-N-acetyl-alpha-D-glucosamine biosynthesis; N-acetyl-alpha-D-glucosamine 1-phosphate from alpha-D-glucosamine 6-phosphate (route II): step 2/2. Its pathway is nucleotide-sugar biosynthesis; UDP-N-acetyl-alpha-D-glucosamine biosynthesis; UDP-N-acetyl-alpha-D-glucosamine from N-acetyl-alpha-D-glucosamine 1-phosphate: step 1/1. It functions in the pathway bacterial outer membrane biogenesis; LPS lipid A biosynthesis. Functionally, catalyzes the last two sequential reactions in the de novo biosynthetic pathway for UDP-N-acetylglucosamine (UDP-GlcNAc). The C-terminal domain catalyzes the transfer of acetyl group from acetyl coenzyme A to glucosamine-1-phosphate (GlcN-1-P) to produce N-acetylglucosamine-1-phosphate (GlcNAc-1-P), which is converted into UDP-GlcNAc by the transfer of uridine 5-monophosphate (from uridine 5-triphosphate), a reaction catalyzed by the N-terminal domain. This is Bifunctional protein GlmU from Citrobacter koseri (strain ATCC BAA-895 / CDC 4225-83 / SGSC4696).